Reading from the N-terminus, the 268-residue chain is MERYQQLFTRLSEKKEGAFVPFVTLGDPSPEQSLKIIDTLIAAGADALELGVPFSDPLADGPTIQDANLRAFAAGVTSGQCFEMLAAIRQKYPEIPIGLLMYANLVFSNGIDEFYQRCAEVGVDSVLVADVPVVESAAFRAAALRHGIAPIFICPPNADDELLREIASYGRGYTYLVSRAGVTGAEKRAQLPLNHLVAKLNEYHAAPPLQGFGISDPAQVRETVASGAAGAISGSAIVRIIEKNLNQPDVMLSELHAFVSEMKAATRS.

Active-site proton acceptor residues include Glu49 and Asp60.

Belongs to the TrpA family. In terms of assembly, tetramer of two alpha and two beta chains.

It carries out the reaction (1S,2R)-1-C-(indol-3-yl)glycerol 3-phosphate + L-serine = D-glyceraldehyde 3-phosphate + L-tryptophan + H2O. It participates in amino-acid biosynthesis; L-tryptophan biosynthesis; L-tryptophan from chorismate: step 5/5. The alpha subunit is responsible for the aldol cleavage of indoleglycerol phosphate to indole and glyceraldehyde 3-phosphate. This is Tryptophan synthase alpha chain from Pectobacterium atrosepticum (strain SCRI 1043 / ATCC BAA-672) (Erwinia carotovora subsp. atroseptica).